A 98-amino-acid polypeptide reads, in one-letter code: MPYIYMNITLAFVISLIGTLMYRSHLMSSLLCLEGMLLSLFTLNALLSLNMNFTLSTMVPLILLVFAACEAAVGLALLVMISNTYGLDYVQNLNLLQC.

3 helical membrane-spanning segments follow: residues 1 to 21 (MPYI…GTLM), 29 to 49 (SLLC…LLSL), and 61 to 81 (LILL…LVMI).

The protein belongs to the complex I subunit 4L family. As to quaternary structure, core subunit of respiratory chain NADH dehydrogenase (Complex I) which is composed of 45 different subunits.

Its subcellular location is the mitochondrion inner membrane. The catalysed reaction is a ubiquinone + NADH + 5 H(+)(in) = a ubiquinol + NAD(+) + 4 H(+)(out). Its function is as follows. Core subunit of the mitochondrial membrane respiratory chain NADH dehydrogenase (Complex I) which catalyzes electron transfer from NADH through the respiratory chain, using ubiquinone as an electron acceptor. Part of the enzyme membrane arm which is embedded in the lipid bilayer and involved in proton translocation. This is NADH-ubiquinone oxidoreductase chain 4L (MT-ND4L) from Elephas maximus (Indian elephant).